Consider the following 338-residue polypeptide: Glycerol-3-phosphate dehydrogenase [NAD(P)+] (338 aa).

W11, R30, and K109 together coordinate NADPH. Sn-glycerol 3-phosphate is bound by residues K109, G143, and S145. A147 is a binding site for NADPH. Residues K198, D251, S261, R262, and N263 each coordinate sn-glycerol 3-phosphate. Catalysis depends on K198, which acts as the Proton acceptor. R262 provides a ligand contact to NADPH. 2 residues coordinate NADPH: V286 and E288.

This sequence belongs to the NAD-dependent glycerol-3-phosphate dehydrogenase family.

Its subcellular location is the cytoplasm. The enzyme catalyses sn-glycerol 3-phosphate + NAD(+) = dihydroxyacetone phosphate + NADH + H(+). It carries out the reaction sn-glycerol 3-phosphate + NADP(+) = dihydroxyacetone phosphate + NADPH + H(+). It participates in membrane lipid metabolism; glycerophospholipid metabolism. Functionally, catalyzes the reduction of the glycolytic intermediate dihydroxyacetone phosphate (DHAP) to sn-glycerol 3-phosphate (G3P), the key precursor for phospholipid synthesis. The chain is Glycerol-3-phosphate dehydrogenase [NAD(P)+] from Cupriavidus necator (strain ATCC 17699 / DSM 428 / KCTC 22496 / NCIMB 10442 / H16 / Stanier 337) (Ralstonia eutropha).